A 361-amino-acid polypeptide reads, in one-letter code: L-threonine 3-dehydrogenase (361 aa).

Cys38 lines the Zn(2+) pocket. Catalysis depends on charge relay system residues Thr40 and His43. Zn(2+)-binding residues include His63, Glu64, Cys93, Cys96, Cys99, and Cys107. Residues Ile175, Asp195, Arg200, 262–264, and 286–287 contribute to the NAD(+) site; these read LGI and IY.

This sequence belongs to the zinc-containing alcohol dehydrogenase family. Homotetramer. The cofactor is Zn(2+).

It is found in the cytoplasm. It catalyses the reaction L-threonine + NAD(+) = (2S)-2-amino-3-oxobutanoate + NADH + H(+). It functions in the pathway amino-acid degradation; L-threonine degradation via oxydo-reductase pathway; glycine from L-threonine: step 1/2. Its function is as follows. Catalyzes the NAD(+)-dependent oxidation of L-threonine to 2-amino-3-ketobutyrate. The protein is L-threonine 3-dehydrogenase of Pectobacterium atrosepticum (strain SCRI 1043 / ATCC BAA-672) (Erwinia carotovora subsp. atroseptica).